The chain runs to 174 residues: V-type proton ATPase catalytic subunit A (174 aa).

This sequence belongs to the ATPase alpha/beta chains family. In terms of assembly, V-ATPase is a heteromultimeric enzyme made up of two complexes: the ATP-hydrolytic V1 complex and the proton translocation V0 complex. The V1 complex consists of three catalytic AB heterodimers that form a heterohexamer, three peripheral stalks each consisting of EG heterodimers, one central rotor including subunits D and F, and the regulatory subunits C and H. The proton translocation complex V0 consists of the proton transport subunit a, a ring of proteolipid subunits c9c'', rotary subunit d, subunits e and f, and the accessory subunits ATP6AP1/Ac45 and ATP6AP2/PRR. Interacts with the V0 complex V-ATPase subunit a4 ATP6V0A4. Interacts with WFS1. Interacts with alpha-crystallin B chain/CRYAB and with MTOR, forming a ternary complex.

It localises to the cytoplasm. The protein resides in the cytosol. The protein localises to the cytoplasmic vesicle. It is found in the secretory vesicle. Its subcellular location is the clathrin-coated vesicle membrane. It localises to the lysosome. It catalyses the reaction ATP + H2O + 4 H(+)(in) = ADP + phosphate + 5 H(+)(out). Its activity is regulated as follows. ATP hydrolysis occurs at the interface between the nucleotide-binding domains of subunits A and B. ATP hydrolysis triggers a conformational change in the subunits D and F, which induces a shift of subunit d. The c-ring is subsequently rotated and results in a continuous proton translocation across the membrane. Catalytic subunit of the V1 complex of vacuolar(H+)-ATPase (V-ATPase), a multisubunit enzyme composed of a peripheral complex (V1) that hydrolyzes ATP and a membrane integral complex (V0) that translocates protons. V-ATPase is responsible for acidifying and maintaining the pH of intracellular compartments and in some cell types, is targeted to the plasma membrane, where it is responsible for acidifying the extracellular environment. In aerobic conditions, involved in intracellular iron homeostasis, thus triggering the activity of Fe(2+) prolyl hydroxylase (PHD) enzymes, and leading to HIF1A hydroxylation and subsequent proteasomal degradation. May play a role in neurite development and synaptic connectivity. This is V-type proton ATPase catalytic subunit A from Mesocricetus auratus (Golden hamster).